We begin with the raw amino-acid sequence, 492 residues long: Putative methyl-accepting chemotaxis AlkN (492 aa).

A run of 2 helical transmembrane segments spans residues 9–29 (FFLI…GMRL) and 159–179 (YVYF…FLLM). The HAMP domain maps to 180–231 (KKTRSSIDEIVHVMNDMSRGDLTYRTIPSNDEVGKMQSSIIAMGAGVSALIE). A Methyl-accepting transducer domain is found at 236 to 472 (IQGDLFNSAG…DMLDNANIIR (237 aa)).

It belongs to the methyl-accepting chemotaxis (MCP) protein family.

The protein localises to the membrane. Its pathway is hydrocarbon metabolism; alkane degradation. Functionally, chemotactic-signal transducers respond to changes in the concentration of attractants and repellents in the environment, transduce a signal from the outside to the inside of the cell, and facilitate sensory adaptation through the variation of the level of methylation. This Ectopseudomonas oleovorans (Pseudomonas oleovorans) protein is Putative methyl-accepting chemotaxis AlkN (alkN).